Reading from the N-terminus, the 611-residue chain is MEESETVLKLRRQLKEAEEERVKAAHYGLELLESQSDLQNQLEEQRNEMTGTIENLEQEKYSLQREVELKNRMLESVTSECENIRQQQKLILEQLQEQLERNHHRELGEIKDKLEKLKAELDEARLSEKQLKHKLEYQTEVLANKSEELRMMSERVHETMSSEMLTLQLEKTELESAKANLEQEVNELQYREQQLLLTNGTQSRKLEHLQTEKEEREKESVGYFSALEKAREANQDLQAQLDIALQQAQDPNSKGNSLFSEVEDRRAEMERQLISMKVQFQSLQKQHAFSRQQMHRMKVQIATLLQMKGSQSDPEQLERLQAMVAQKNSEIEALVMKVRQLEKSQQVSENGPAVGSSDNLGQGDETYYVDLLKMKLLNSSKENEKIKDELSLQRMKALAESQRVLELERKLFANDRHLKLSQGENMKLRVSLDEIKMKYEPDEMGKIHTQKRRKEQLPLDFPMDNTSAAVTSGTEAQGLYDATAGETCTAESTDGRIHSKEDLSLSTKEQDPSSVAVKPKELPNGPPPKERKRVRIMEDENNAQDLNKRNTHNCSVTSASPRSTSEDATSESKRFDEEQEKRKQERKSRLRAPPVLHVPSKPNATTQCPQQ.

Positions 1–390 (MEESETVLKL…KENEKIKDEL (390 aa)) form a coiled coil. Residues 487 to 611 (TCTAESTDGR…PNATTQCPQQ (125 aa)) are disordered. Residues 493–511 (TDGRIHSKEDLSLSTKEQD) show a composition bias toward basic and acidic residues. Residues 552–567 (HNCSVTSASPRSTSED) are compositionally biased toward polar residues. Residues 570–583 (SESKRFDEEQEKRK) show a composition bias toward basic and acidic residues. Polar residues predominate over residues 602–611 (PNATTQCPQQ).

This sequence belongs to the Spindly family.

Its subcellular location is the chromosome. It is found in the centromere. The protein localises to the kinetochore. Its function is as follows. Required for the localization of dynein and dynactin to the mitotic kintochore. Dynein is believed to control the initial lateral interaction between the kinetochore and spindle microtubules and to facilitate the subsequent formation of end-on kinetochore-microtubule attachments mediated by the NDC80 complex. This is Protein Spindly-A (spdl1-a) from Xenopus laevis (African clawed frog).